Reading from the N-terminus, the 137-residue chain is ATP synthase epsilon chain (137 aa).

It belongs to the ATPase epsilon chain family. As to quaternary structure, F-type ATPases have 2 components, CF(1) - the catalytic core - and CF(0) - the membrane proton channel. CF(1) has five subunits: alpha(3), beta(3), gamma(1), delta(1), epsilon(1). CF(0) has three main subunits: a, b and c.

It localises to the cellular thylakoid membrane. Its function is as follows. Produces ATP from ADP in the presence of a proton gradient across the membrane. The sequence is that of ATP synthase epsilon chain (atpC) from Synechococcus elongatus (strain ATCC 33912 / PCC 7942 / FACHB-805) (Anacystis nidulans R2).